The sequence spans 267 residues: Hydroxyethylthiazole kinase (267 aa).

M42 provides a ligand contact to substrate. ATP is bound by residues R118 and S164. A191 lines the substrate pocket.

The protein belongs to the Thz kinase family. Requires Mg(2+) as cofactor.

It carries out the reaction 5-(2-hydroxyethyl)-4-methylthiazole + ATP = 4-methyl-5-(2-phosphooxyethyl)-thiazole + ADP + H(+). Its pathway is cofactor biosynthesis; thiamine diphosphate biosynthesis; 4-methyl-5-(2-phosphoethyl)-thiazole from 5-(2-hydroxyethyl)-4-methylthiazole: step 1/1. In terms of biological role, catalyzes the phosphorylation of the hydroxyl group of 4-methyl-5-beta-hydroxyethylthiazole (THZ). The protein is Hydroxyethylthiazole kinase of Pasteurella multocida (strain Pm70).